A 389-amino-acid polypeptide reads, in one-letter code: Alanine racemase (389 aa).

The active-site Proton acceptor; specific for D-alanine is Lys48. N6-(pyridoxal phosphate)lysine is present on Lys48. Residue Arg144 coordinates substrate. Tyr281 (proton acceptor; specific for L-alanine) is an active-site residue. Met329 lines the substrate pocket.

It belongs to the alanine racemase family. Pyridoxal 5'-phosphate serves as cofactor.

The enzyme catalyses L-alanine = D-alanine. It participates in amino-acid biosynthesis; D-alanine biosynthesis; D-alanine from L-alanine: step 1/1. Catalyzes the interconversion of L-alanine and D-alanine. May also act on other amino acids. The protein is Alanine racemase (alr) of Leptospira interrogans serogroup Icterohaemorrhagiae serovar copenhageni (strain Fiocruz L1-130).